A 495-amino-acid polypeptide reads, in one-letter code: ATP synthase subunit beta, chloroplastic (495 aa).

172-179 (GGAGVGKT) is an ATP binding site.

Belongs to the ATPase alpha/beta chains family. F-type ATPases have 2 components, CF(1) - the catalytic core - and CF(0) - the membrane proton channel. CF(1) has five subunits: alpha(3), beta(3), gamma(1), delta(1), epsilon(1). CF(0) has four main subunits: a(1), b(1), b'(1) and c(9-12).

It is found in the plastid. Its subcellular location is the chloroplast thylakoid membrane. It catalyses the reaction ATP + H2O + 4 H(+)(in) = ADP + phosphate + 5 H(+)(out). Functionally, produces ATP from ADP in the presence of a proton gradient across the membrane. The catalytic sites are hosted primarily by the beta subunits. The protein is ATP synthase subunit beta, chloroplastic of Bowiea volubilis (Climbing onion).